Consider the following 173-residue polypeptide: Crossover junction endodeoxyribonuclease RuvC (173 aa).

Active-site residues include D8, E67, and D139. Mg(2+) is bound by residues D8, E67, and D139.

The protein belongs to the RuvC family. In terms of assembly, homodimer which binds Holliday junction (HJ) DNA. The HJ becomes 2-fold symmetrical on binding to RuvC with unstacked arms; it has a different conformation from HJ DNA in complex with RuvA. In the full resolvosome a probable DNA-RuvA(4)-RuvB(12)-RuvC(2) complex forms which resolves the HJ. Mg(2+) is required as a cofactor.

The protein resides in the cytoplasm. It carries out the reaction Endonucleolytic cleavage at a junction such as a reciprocal single-stranded crossover between two homologous DNA duplexes (Holliday junction).. Its function is as follows. The RuvA-RuvB-RuvC complex processes Holliday junction (HJ) DNA during genetic recombination and DNA repair. Endonuclease that resolves HJ intermediates. Cleaves cruciform DNA by making single-stranded nicks across the HJ at symmetrical positions within the homologous arms, yielding a 5'-phosphate and a 3'-hydroxyl group; requires a central core of homology in the junction. The consensus cleavage sequence is 5'-(A/T)TT(C/G)-3'. Cleavage occurs on the 3'-side of the TT dinucleotide at the point of strand exchange. HJ branch migration catalyzed by RuvA-RuvB allows RuvC to scan DNA until it finds its consensus sequence, where it cleaves and resolves the cruciform DNA. In terms of biological role, plays a role in recovery after DNA ADP-ribosylation, probably via replication fork reversal. The chain is Crossover junction endodeoxyribonuclease RuvC from Escherichia coli O127:H6 (strain E2348/69 / EPEC).